Consider the following 274-residue polypeptide: Acetyl-coenzyme A carboxylase carboxyl transferase subunit beta (274 aa).

A CoA carboxyltransferase N-terminal domain is found at 18–274; it reads IWTKCKKCDY…FYNRQCFLKF (257 aa). Cys22, Cys25, Cys41, and Cys44 together coordinate Zn(2+). The segment at 22–44 adopts a C4-type zinc-finger fold; it reads CKKCDYILLQKDFEENLMVCPKC.

It belongs to the AccD/PCCB family. As to quaternary structure, acetyl-CoA carboxylase is a heterohexamer composed of biotin carboxyl carrier protein (AccB), biotin carboxylase (AccC) and two subunits each of ACCase subunit alpha (AccA) and ACCase subunit beta (AccD). The cofactor is Zn(2+).

It is found in the cytoplasm. The catalysed reaction is N(6)-carboxybiotinyl-L-lysyl-[protein] + acetyl-CoA = N(6)-biotinyl-L-lysyl-[protein] + malonyl-CoA. Its pathway is lipid metabolism; malonyl-CoA biosynthesis; malonyl-CoA from acetyl-CoA: step 1/1. Functionally, component of the acetyl coenzyme A carboxylase (ACC) complex. Biotin carboxylase (BC) catalyzes the carboxylation of biotin on its carrier protein (BCCP) and then the CO(2) group is transferred by the transcarboxylase to acetyl-CoA to form malonyl-CoA. The protein is Acetyl-coenzyme A carboxylase carboxyl transferase subunit beta of Endomicrobium trichonymphae.